The following is a 276-amino-acid chain: Putative translation initiation factor eIF-2B subunit 2-like (276 aa).

This sequence belongs to the eIF-2B alpha/beta/delta subunits family. As to quaternary structure, complex of two different subunits.

In terms of biological role, catalyzes the exchange of initiation factor 2-bound GDP for GTP. The sequence is that of Putative translation initiation factor eIF-2B subunit 2-like from Pyrococcus furiosus (strain ATCC 43587 / DSM 3638 / JCM 8422 / Vc1).